The chain runs to 233 residues: Phosphoribosylformylglycinamidine synthase subunit PurQ (233 aa).

Residues 3–233 (AAILVFPGIN…GLAQHLEKAA (231 aa)) enclose the Glutamine amidotransferase type-1 domain. Cysteine 87 serves as the catalytic Nucleophile. Residues histidine 204 and glutamate 206 contribute to the active site.

Part of the FGAM synthase complex composed of 1 PurL, 1 PurQ and 2 PurS subunits.

Its subcellular location is the cytoplasm. The catalysed reaction is N(2)-formyl-N(1)-(5-phospho-beta-D-ribosyl)glycinamide + L-glutamine + ATP + H2O = 2-formamido-N(1)-(5-O-phospho-beta-D-ribosyl)acetamidine + L-glutamate + ADP + phosphate + H(+). It catalyses the reaction L-glutamine + H2O = L-glutamate + NH4(+). The protein operates within purine metabolism; IMP biosynthesis via de novo pathway; 5-amino-1-(5-phospho-D-ribosyl)imidazole from N(2)-formyl-N(1)-(5-phospho-D-ribosyl)glycinamide: step 1/2. In terms of biological role, part of the phosphoribosylformylglycinamidine synthase complex involved in the purines biosynthetic pathway. Catalyzes the ATP-dependent conversion of formylglycinamide ribonucleotide (FGAR) and glutamine to yield formylglycinamidine ribonucleotide (FGAM) and glutamate. The FGAM synthase complex is composed of three subunits. PurQ produces an ammonia molecule by converting glutamine to glutamate. PurL transfers the ammonia molecule to FGAR to form FGAM in an ATP-dependent manner. PurS interacts with PurQ and PurL and is thought to assist in the transfer of the ammonia molecule from PurQ to PurL. This chain is Phosphoribosylformylglycinamidine synthase subunit PurQ, found in Bradyrhizobium diazoefficiens (strain JCM 10833 / BCRC 13528 / IAM 13628 / NBRC 14792 / USDA 110).